We begin with the raw amino-acid sequence, 473 residues long: Glycogen synthase (473 aa).

Lys-15 is a binding site for ADP-alpha-D-glucose.

Belongs to the glycosyltransferase 1 family. Bacterial/plant glycogen synthase subfamily.

The catalysed reaction is [(1-&gt;4)-alpha-D-glucosyl](n) + ADP-alpha-D-glucose = [(1-&gt;4)-alpha-D-glucosyl](n+1) + ADP + H(+). The protein operates within glycan biosynthesis; glycogen biosynthesis. Synthesizes alpha-1,4-glucan chains using ADP-glucose. This chain is Glycogen synthase, found in Flavobacterium johnsoniae (strain ATCC 17061 / DSM 2064 / JCM 8514 / BCRC 14874 / CCUG 350202 / NBRC 14942 / NCIMB 11054 / UW101) (Cytophaga johnsonae).